The following is a 509-amino-acid chain: Cytochrome P450 monooxygenase traB (509 aa).

A helical membrane pass occupies residues L8–F28. C453 serves as a coordination point for heme.

It belongs to the cytochrome P450 family. The cofactor is heme.

The protein resides in the membrane. The protein operates within secondary metabolite biosynthesis. Its function is as follows. Cytochrome P450 monooxygenase; part of the tra gene cluster that produces terrestric acid. The clavatol biosynthesis cluster cla and the terrestric acid cluster tra are both involved in the production of peniphenones and penilactones. The non-reducing PKS claF is responsible for the formation of clavatol from successive condensations of 3 malonyl-CoA units, presumably with a simple acetyl-CoA starter unit, and 2 methylation steps. The esterase claE probably collaborates with claF by catalyzing the hydrolysis of ACP-bound acyl intermediates to free the ACP from stalled intermediates. The clavatol oxidase claD then converts clavatol to hydroxyclavatol. Spontaneous dehydration of hydroxyclavatol leads to the accumulation of the highly active ortho-quinone methide. On the other hand, the PKS-NRPS hybrid traA is involved in the formation of crustosic acid, with the help of traB and traD. The polyketide synthase module (PKS) of traA is responsible for the synthesis of the polyketide backbone via the condensation of an acetyl-CoA starter unit with 3 malonyl-CoA units. The downstream nonribosomal peptide synthetase (NRPS) module then amidates the carboxyl end of the polyketide with L-malic acid. Because traA lacks a designated enoylreductase (ER) domain, the required activity is provided the enoyl reductase traG. Crustosic acid undergoes decarboxylation and isomerization to the terrestric acid, catalyzed by the 2-oxoglutarate-dependent dioxygenase traH. Both acids are further converted to the 2 gamma-butyrolactones (R)-5-methyltetronic acid and (S)-5-carboxylmethyltetronic acid, with involvement of the cytochrome P450 monooxygenase claJ. Spontaneous addition of the methide to these gamma-butyrolactones leads to peniphenone D and penilactone D, which undergo again stereospecific attacking by methide to give penilactones A and B. This is Cytochrome P450 monooxygenase traB from Penicillium crustosum (Blue mold fungus).